The following is a 102-amino-acid chain: Small ribosomal subunit protein bS6 (102 aa).

This sequence belongs to the bacterial ribosomal protein bS6 family.

Functionally, binds together with bS18 to 16S ribosomal RNA. The sequence is that of Small ribosomal subunit protein bS6 from Deinococcus deserti (strain DSM 17065 / CIP 109153 / LMG 22923 / VCD115).